The chain runs to 310 residues: Deoxyribonuclease gamma (310 aa).

The first 25 residues, 1–25 (MSLYPASPYLASLLLFILALHGALS), serve as a signal peptide directing secretion. Positions 40–56 (KKENHNAMDIIVKIIKR) match the Bipartite nuclear localization signal motif. Active-site residues include Glu105 and His160. Cysteines 199 and 236 form a disulfide. The segment at 289–310 (SRAFTNSRKSVSLKKKKKGSRS) is not required for free DNA-nuclease activity but required for activity towards liposome-coated DNA. The Nuclear localization signal signature appears at 301-307 (LKKKKKG).

This sequence belongs to the DNase I family. As to quaternary structure, monomer. Requires Ca(2+) as cofactor. Mg(2+) is required as a cofactor. Post-translationally, seems to be synthesized as an inactive precursor protein and converted into an active mature enzyme by removal of the N-terminal precursor peptide during apoptosis. In terms of processing, poly-ADP-ribosylated by PARP1. ADP-ribosylation negatively regulates enzymatic activity during apoptosis. In terms of tissue distribution, detected at high levels in spleen, lymph nodes, thymus and liver. Observed also in kidney and testis, but not in brain or heart.

Its subcellular location is the nucleus. It localises to the secreted. With respect to regulation, inhibited by zinc. Its function is as follows. Has DNA hydrolytic activity. Is capable of both single- and double-stranded DNA cleavage, producing DNA fragments with 3'-OH ends. Can cleave chromatin to nucleosomal units and cleaves nucleosomal and liposome-coated DNA. Acts in internucleosomal DNA fragmentation (INDF) during apoptosis and necrosis. The role in apoptosis includes myogenic and neuronal differentiation, and BCR-mediated clonal deletion of self-reactive B cells. Is active on chromatin in apoptotic cell-derived membrane-coated microparticles and thus suppresses anti-DNA autoimmunity. Together with DNASE1, plays a key role in degrading neutrophil extracellular traps (NETs). NETs are mainly composed of DNA fibers and are released by neutrophils to bind pathogens during inflammation. Degradation of intravascular NETs by DNASE1 and DNASE1L3 is required to prevent formation of clots that obstruct blood vessels and cause organ damage following inflammation. The chain is Deoxyribonuclease gamma (Dnase1l3) from Rattus norvegicus (Rat).